A 668-amino-acid chain; its full sequence is MASEKSTSKGQAWFCTTGLPSDIEIEVDDMTFHLHKFPLMSKSRKLHRLITEQETRSSSSMALITVIDPKVEETDKKGKGHEIEDDKEEEEVEEQEIEENGYPHIKLEDFPGSSESFEMVAKFCYGVKMDLSASTVVPLRCAAEHLEMTEEYSPDNLISKTERFLSHSVYKSLRESIKALKACESVSPLAGSLGITEQCIDSIVSRASSADPSLFGWPVNDGGGRGNISATDLQLIPGGAAKSRKKPSRDSNMELWFEDLTQLSLPIFKTVILSMRSGDLSSDIIESCLICYAKKHIPGILRSNRKPPSSSSTAVSENEQRELLETITSNLPLDKSSISSTTRFLFGLLRTAIILNAAEICRDLLERKIGSQLERATLDDLLVPSYSYLNETLYDVDLVERILGHFLDTLEQSNTAIVEVDGKSPSLMLVGKLIDGFLAEIASDANLKSDKFYNLAISLPDQARLYDDGLYRAVDVYLKAHPWVSEAEREKICGVMDCQKLTLEACTHAAQNERLPLRAVVQVLFFEQLQLRHAIAGTLLAAQSPSTSQSTEPRPSAAIRNLTITEEDGDEAEGERQVDAGKWKKTVRENQVLRLDMDTMRTRVHRLERECSNMKKVIAKIDKEGSSPATTTDRPRSWSITKKFGCKFKTQVCDSHEATMVDHRSRRS.

The BTB domain maps to 21 to 133 (SDIEIEVDDM…CYGVKMDLSA (113 aa)). Over residues 73–84 (ETDKKGKGHEIE) the composition is skewed to basic and acidic residues. Residues 73–98 (ETDKKGKGHEIEDDKEEEEVEEQEIE) are disordered. Residues 85–98 (DDKEEEEVEEQEIE) are compositionally biased toward acidic residues. An NPH3 domain is found at 254–530 (ELWFEDLTQL…VQVLFFEQLQ (277 aa)). The residue at position 471 (tyrosine 471) is a Phosphotyrosine.

It belongs to the NPH3 family.

It participates in protein modification; protein ubiquitination. In terms of biological role, may act as a substrate-specific adapter of an E3 ubiquitin-protein ligase complex (CUL3-RBX1-BTB) which mediates the ubiquitination and subsequent proteasomal degradation of target proteins. This Arabidopsis thaliana (Mouse-ear cress) protein is BTB/POZ domain-containing protein At5g66560.